Consider the following 242-residue polypeptide: UPF0246 protein SPCG_1533 (242 aa).

Belongs to the UPF0246 family.

This chain is UPF0246 protein SPCG_1533, found in Streptococcus pneumoniae (strain CGSP14).